The chain runs to 230 residues: Metaxin-2 homolog (230 aa).

The protein belongs to the metaxin family. As to quaternary structure, associates with the mitochondrial contact site and cristae organizing system (MICOS) complex (also known as MINOS or MitOS complex).

It is found in the mitochondrion outer membrane. Functionally, involved in transport of proteins into the mitochondrion. The protein is Metaxin-2 homolog (mtx-2) of Caenorhabditis elegans.